A 205-amino-acid polypeptide reads, in one-letter code: Putative 3-methyladenine DNA glycosylase (205 aa).

It belongs to the DNA glycosylase MPG family.

This chain is Putative 3-methyladenine DNA glycosylase, found in Mycolicibacterium paratuberculosis (strain ATCC BAA-968 / K-10) (Mycobacterium paratuberculosis).